Here is a 313-residue protein sequence, read N- to C-terminus: MSFTDQVKHEVSRLESNNKMCQLAELSALIMMNGSIQIINKNLAVKVRLYHGDLARKVYKLIKERFELNIEIMVRRRNHFSTYQNIYDLFLPPQPGIEVFLKKVGVLDEDHNLLFRIKKELVTSKSCQKSYVRGAFLGGGSVNNPRGEYHLEFRCEHESFAEDLLMLLKRFGLEGHLTEHRKKYVVYFKSFSEVATILNIIGAHKALLKLEDNKVLKEVKNGVNRRVNCETANLDKTVKAAMLQLEDIELIEKTRGLETLSNSLQEIAIIRKKYPYASLKELGKLLDPPLSKSGVNHRLRRIKSIANEIRGER.

The segment at residues 278–311 (SLKELGKLLDPPLSKSGVNHRLRRIKSIANEIRG) is a DNA-binding region (H-T-H motif).

The protein belongs to the WhiA family.

Involved in cell division and chromosome segregation. This is Probable cell division protein WhiA from Halothermothrix orenii (strain H 168 / OCM 544 / DSM 9562).